A 410-amino-acid chain; its full sequence is 3-phosphoshikimate 1-carboxyvinyltransferase (410 aa).

3-phosphoshikimate contacts are provided by K20, S21, and R25. Phosphoenolpyruvate is bound at residue K20. G87 and R115 together coordinate phosphoenolpyruvate. S157, S158, Q159, S183, D293, and K320 together coordinate 3-phosphoshikimate. Residue Q159 coordinates phosphoenolpyruvate. The active-site Proton acceptor is D293. Positions 324, 365, and 391 each coordinate phosphoenolpyruvate.

It belongs to the EPSP synthase family. Monomer.

It is found in the cytoplasm. The catalysed reaction is 3-phosphoshikimate + phosphoenolpyruvate = 5-O-(1-carboxyvinyl)-3-phosphoshikimate + phosphate. It functions in the pathway metabolic intermediate biosynthesis; chorismate biosynthesis. Functionally, catalyzes the transfer of the enolpyruvyl moiety of phosphoenolpyruvate (PEP) to the 5-hydroxyl of shikimate-3-phosphate (S3P) to produce enolpyruvyl shikimate-3-phosphate and inorganic phosphate. This Thermoplasma volcanium (strain ATCC 51530 / DSM 4299 / JCM 9571 / NBRC 15438 / GSS1) protein is 3-phosphoshikimate 1-carboxyvinyltransferase.